We begin with the raw amino-acid sequence, 404 residues long: Cysteine desulfurase IscS (404 aa).

Pyridoxal 5'-phosphate contacts are provided by residues 75–76, N155, Q183, and 203–205; these read AT and SAH. N6-(pyridoxal phosphate)lysine is present on K206. T243 lines the pyridoxal 5'-phosphate pocket. C328 serves as the catalytic Cysteine persulfide intermediate. C328 is a binding site for [2Fe-2S] cluster.

Belongs to the class-V pyridoxal-phosphate-dependent aminotransferase family. NifS/IscS subfamily. As to quaternary structure, homodimer. Forms a heterotetramer with IscU, interacts with other sulfur acceptors. The cofactor is pyridoxal 5'-phosphate.

Its subcellular location is the cytoplasm. It carries out the reaction (sulfur carrier)-H + L-cysteine = (sulfur carrier)-SH + L-alanine. It functions in the pathway cofactor biosynthesis; iron-sulfur cluster biosynthesis. Master enzyme that delivers sulfur to a number of partners involved in Fe-S cluster assembly, tRNA modification or cofactor biosynthesis. Catalyzes the removal of elemental sulfur atoms from cysteine to produce alanine. Functions as a sulfur delivery protein for Fe-S cluster synthesis onto IscU, an Fe-S scaffold assembly protein, as well as other S acceptor proteins. This Pseudomonas syringae pv. syringae (strain B728a) protein is Cysteine desulfurase IscS.